The sequence spans 44 residues: MFKIFRTKWFRSAPVLATLWLSSTAVILIGVNSYFPDYLFMPMS.

The chain crosses the membrane as a helical span at residues 13-35; it reads APVLATLWLSSTAVILIGVNSYF.

It belongs to the PsaJ family.

Its subcellular location is the cellular thylakoid membrane. May help in the organization of the PsaE and PsaF subunits. This Prochlorococcus marinus (strain NATL2A) protein is Photosystem I reaction center subunit IX 2 (psaJ2).